An 846-amino-acid chain; its full sequence is Homeodomain-interacting protein kinase 1 (846 aa).

Residues 47–74 form a disordered region; sequence NPFSIQKAPGTSSDNEQRAPKRRADEEA. Basic and acidic residues predominate over residues 61-72; it reads NEQRAPKRRADE. A Protein kinase domain is found at 147 to 483; it reads YEVLEFLGKG…PAEGLESKFV (337 aa). ATP-binding positions include 153 to 161 and lysine 176; that span reads LGKGTFGQV. Aspartate 272 serves as the catalytic Proton acceptor. The disordered stretch occupies residues 741 to 790; the sequence is LAAQPKKNSPAPSVITLSSDEDSNGAGSSNSGSTTRTGAVNPVRNDTLPM. The span at 746–757 shows a compositional bias: polar residues; sequence KKNSPAPSVITL. Residues 764 to 773 are compositionally biased toward low complexity; sequence NGAGSSNSGS.

Belongs to the protein kinase superfamily. CMGC Ser/Thr protein kinase family. HIPK subfamily. In terms of tissue distribution, broadly expressed during embryogenesis. Expression becomes more restricted during larval development. L3 larvae display robust expression in many head and motor neurons, and lower levels of expression in the intestine and the seam cells of the hypodermis. By late L4 stage, expression is largely restricted to neurons and is maintained in nerve cells of the head and nerve cord during adulthood. Expressed in adult pharyngeal cells, hypodermal cells, gonadal sheath cells and distal tip cells but not in germline cells. Expressed in serotonergic neurons such as ADF and NSM and in GABAergic neurons, including RME, RIS and DVB.

The protein localises to the nucleus. The enzyme catalyses L-seryl-[protein] + ATP = O-phospho-L-seryl-[protein] + ADP + H(+). The catalysed reaction is L-threonyl-[protein] + ATP = O-phospho-L-threonyl-[protein] + ADP + H(+). In terms of biological role, serine/threonine-protein kinase required in the somatic gonadal cells to regulate germline proliferation during larval development and in adulthood. Plays a role in the development/differentiation of gonadal distal tip cells. Required for normal lifespan in a pha-4 and mxl-2-dependent manner. Also contributes to survival following heat or oxidative stress. Prevents sumoylation and inactivation of heat shock transcription factor hsf-1 which enhances hsf-1-dependent transcriptional induction of chaperones in response to heat shock. Also required for hormetic extension of longevity in response to heat stress. Also contributes to longevity by promoting autophagy under nutrient stress conditions through induction of autophagosome formation and autophagy gene expression. Provides protection against proteotoxic polyglutamine aggregate and the associated locomotory toxicity, probably as a result of kinase activity. Contributes to longevity via gamma-aminobutyric acid (GABA)ergic signaling by promoting autophagy through mxl-2, hlh-30 and daf-16 but independent of hsf-1 and phas-4, to induce autophagosome formation and the expression of autophagy genes. Promotes thermotolerance via serotonergic signaling by serotonergic neurons. Preserves neuronal function in aging animals by mitigating against age-associated decline in axonal and synaptic transmissions. Acts as an activator of nhr-49-dependent hypoxia response, including the up-regulation of fmo-2 and acs-2, the induction of autophagosome formation and expression of autophagy genes. In Caenorhabditis elegans, this protein is Homeodomain-interacting protein kinase 1.